Consider the following 585-residue polypeptide: tRNA 5-methylaminomethyl-2-thiouridine biosynthesis bifunctional protein MnmC (585 aa).

Residues 1-236 (MTPDGLYCDP…KRERLEAVWP (236 aa)) form a tRNA (mnm(5)s(2)U34)-methyltransferase region. The FAD-dependent cmnm(5)s(2)U34 oxidoreductase stretch occupies residues 254 to 585 (LGAGIAGASL…SRRAGQGAAG (332 aa)). A disordered region spans residues 564–585 (EAMAPGRFAERRSRRAGQGAAG).

It in the N-terminal section; belongs to the methyltransferase superfamily. tRNA (mnm(5)s(2)U34)-methyltransferase family. This sequence in the C-terminal section; belongs to the DAO family. The cofactor is FAD.

It localises to the cytoplasm. It catalyses the reaction 5-aminomethyl-2-thiouridine(34) in tRNA + S-adenosyl-L-methionine = 5-methylaminomethyl-2-thiouridine(34) in tRNA + S-adenosyl-L-homocysteine + H(+). In terms of biological role, catalyzes the last two steps in the biosynthesis of 5-methylaminomethyl-2-thiouridine (mnm(5)s(2)U) at the wobble position (U34) in tRNA. Catalyzes the FAD-dependent demodification of cmnm(5)s(2)U34 to nm(5)s(2)U34, followed by the transfer of a methyl group from S-adenosyl-L-methionine to nm(5)s(2)U34, to form mnm(5)s(2)U34. The protein is tRNA 5-methylaminomethyl-2-thiouridine biosynthesis bifunctional protein MnmC of Maricaulis maris (strain MCS10) (Caulobacter maris).